The following is a 798-amino-acid chain: MLISLNWLKQYVDIKESIDEIANALTMIGQEVEAIDIQGKDLDNVVIGQIVEFDKHPNSDRLTLLKVNVGGEEPLQIICGAKNHKLNDKVVVAKIGAVLPGNFKIKKSKIRDVESYGMLCSEAELGFTKESEGIIILPEDAPIGTEYREYMNLNDVIFELEITPNRPDCLSHIGIAREVAAYYNRKVKYPMIEITETIESINTMVKVDIEDKDRCKRYMGRVIKNVKVQESPDWLKSRIRAMGLNPINNIVDITNFVMFEYNQPMHAFDLDKLEGNITIRAAKKNEEITTLDGVDRVLKNGELVIADDEKAIAIAGVIGGQNTQIDNETKNIFVEVAYFTPENIRKTSRELGIFTDSAYRNERGMDVENLSNVMARAVSLIAEVAGGDVLSEVIDKYVEKPQRAEISLNLEKLNKFIGKNLTYDEVGKILTHLDIELKPLGEGTMLLIPPSYRADLTRPADIYEEVIRMYGFDNIEAKIPVMSIESGEENINFKMPRIVRGILKELGLNEVINYSFIPKFTKELFNFGDEVIEIKNPLSEDMAIMRPTLLYSLITNIRDNINRNQTDLKLFEISKTFKNLGAEKDGLAIEDLKVGIILSGREDKNLWNQSKTDYNFYDLKGYLEFLLERLNVTKYSLTRLENSNFHPGASAEIKIGEDIIGVFGELHPNLVNYFGIKREKLFFAELNLTKLLKYIKIKVNYESISKYPEVLRDLAITLDRDILVGDMIKEIKKKVALIEKIDIFDVYSGDKIDKDKKSVAMSIILRDKNRTLTDGDIDTAMNTILELIKDKYNGEIRK.

The 110-residue stretch at 39–148 (GKDLDNVVIG…EDAPIGTEYR (110 aa)) folds into the tRNA-binding domain. One can recognise a B5 domain in the interval 401-477 (PQRAEISLNL…RMYGFDNIEA (77 aa)). Residues aspartate 455, aspartate 461, glutamate 464, and glutamate 465 each contribute to the Mg(2+) site. Residues 705-797 (SKYPEVLRDL…IKDKYNGEIR (93 aa)) form the FDX-ACB domain.

Belongs to the phenylalanyl-tRNA synthetase beta subunit family. Type 1 subfamily. Tetramer of two alpha and two beta subunits. It depends on Mg(2+) as a cofactor.

Its subcellular location is the cytoplasm. It carries out the reaction tRNA(Phe) + L-phenylalanine + ATP = L-phenylalanyl-tRNA(Phe) + AMP + diphosphate + H(+). The polypeptide is Phenylalanine--tRNA ligase beta subunit (Fusobacterium nucleatum subsp. nucleatum (strain ATCC 25586 / DSM 15643 / BCRC 10681 / CIP 101130 / JCM 8532 / KCTC 2640 / LMG 13131 / VPI 4355)).